We begin with the raw amino-acid sequence, 454 residues long: MKETSTFSQKLKQFVLLFFPIFITQMSLFAMSFFDTTMSGHASPIDLAGVAIGTSIWIPVSTGLTGILMATTPIVAQLVGSKKKEDVPQVVIQAVYLAICASFVVMLIGFFAVTPILNGMRLEEPVERIAAQFLSIIAIGIIPLFTYTVLRGFIDALGKTRTTMIITLLSLPINVILNYVLIFGHFGFPKLGGVGAAIASTATYWCILIITVMIIRTKEPFASFHIFKQLYRPSLSSWKEFLKLGVPIGFAIFFETSIFAAVTLMMSNFSTTTIAAHQAAMNFASLLYMTPLSLAMAMTIAVGFEVGAKRYNNAKQYGFIGIGLALAFALLYSILLYFFDDEIASIYTTDIQVHHLAKEFLIFAILFQISDAIATPVQGALRGYKDVNVSLIMTLIAYWVIGLPLGYILATYTDWAAKGYWIGLIIGLAFGATFLLIRLFQVQRKYTIENRRSR.

Helical transmembrane passes span glutamine 13–serine 32, leucine 47–methionine 69, valine 90–alanine 112, glutamine 132–isoleucine 154, isoleucine 166–phenylalanine 188, glycine 193–isoleucine 215, leucine 244–methionine 266, leucine 286–alanine 308, tyrosine 317–phenylalanine 339, glutamate 359–leucine 381, asparagine 388–alanine 410, and tyrosine 420–valine 442.

This sequence belongs to the multi antimicrobial extrusion (MATE) (TC 2.A.66.1) family.

It localises to the cell membrane. In terms of biological role, multidrug efflux pump. This is Probable multidrug resistance protein NorM (norM) from Bacillus cereus (strain ATCC 10987 / NRS 248).